We begin with the raw amino-acid sequence, 539 residues long: Kynureninase 2 (539 aa).

The tract at residues D60–N87 is disordered. Over residues G75 to N87 the composition is skewed to polar residues. Pyridoxal 5'-phosphate is bound by residues L171, T172, F199–D202, D290, H293, and Y315. K316 is modified (N6-(pyridoxal phosphate)lysine). Residues G340–G352 are compositionally biased toward gly residues. The tract at residues G340–G363 is disordered. W379 and N407 together coordinate pyridoxal 5'-phosphate.

Belongs to the kynureninase family. Homodimer. Requires pyridoxal 5'-phosphate as cofactor.

The protein resides in the cytoplasm. The enzyme catalyses L-kynurenine + H2O = anthranilate + L-alanine + H(+). It carries out the reaction 3-hydroxy-L-kynurenine + H2O = 3-hydroxyanthranilate + L-alanine + H(+). The protein operates within amino-acid degradation; L-kynurenine degradation; L-alanine and anthranilate from L-kynurenine: step 1/1. It functions in the pathway cofactor biosynthesis; NAD(+) biosynthesis; quinolinate from L-kynurenine: step 2/3. Functionally, catalyzes the cleavage of L-kynurenine (L-Kyn) and L-3-hydroxykynurenine (L-3OHKyn) into anthranilic acid (AA) and 3-hydroxyanthranilic acid (3-OHAA), respectively. This chain is Kynureninase 2, found in Chaetomium globosum (strain ATCC 6205 / CBS 148.51 / DSM 1962 / NBRC 6347 / NRRL 1970) (Soil fungus).